Here is a 66-residue protein sequence, read N- to C-terminus: Large ribosomal subunit protein bL33c (66 aa).

The protein belongs to the bacterial ribosomal protein bL33 family.

The protein resides in the plastid. The protein localises to the chloroplast. The protein is Large ribosomal subunit protein bL33c of Cryptomeria japonica (Japanese cedar).